The sequence spans 348 residues: NADH-quinone oxidoreductase subunit H (348 aa).

8 helical membrane-spanning segments follow: residues 21–41 (IAGI…VIYV), 87–107 (GIFL…WAVI), 120–140 (VGLL…VMAG), 166–186 (IGFI…SEIV), 195–215 (GIVN…LFFI), 258–278 (NILL…LPPI), 288–308 (GFLW…WIWA), and 325–345 (VFLP…MATG).

It belongs to the complex I subunit 1 family. NDH-1 is composed of 14 different subunits. Subunits NuoA, H, J, K, L, M, N constitute the membrane sector of the complex.

Its subcellular location is the cell inner membrane. The catalysed reaction is a quinone + NADH + 5 H(+)(in) = a quinol + NAD(+) + 4 H(+)(out). NDH-1 shuttles electrons from NADH, via FMN and iron-sulfur (Fe-S) centers, to quinones in the respiratory chain. The immediate electron acceptor for the enzyme in this species is believed to be ubiquinone. Couples the redox reaction to proton translocation (for every two electrons transferred, four hydrogen ions are translocated across the cytoplasmic membrane), and thus conserves the redox energy in a proton gradient. This subunit may bind ubiquinone. The protein is NADH-quinone oxidoreductase subunit H of Erythrobacter litoralis (strain HTCC2594).